Here is a 530-residue protein sequence, read N- to C-terminus: PC4 and SFRS1-interacting protein (530 aa).

The PWWP domain occupies 1-64; that stretch reads MTRDFKPGDL…PKDIFPYSEN (64 aa). Residue Lys-75 forms a Glycyl lysine isopeptide (Lys-Gly) (interchain with G-Cter in SUMO2) linkage. Residues 88 to 349 are disordered; the sequence is PKVKFSSQQA…VEKKRETSMD (262 aa). Over residues 93–107 the composition is skewed to low complexity; the sequence is SSQQASAKQSNASSD. Ser-102, Ser-105, and Ser-106 each carry phosphoserine. Residues 113-135 show a composition bias toward basic and acidic residues; sequence KETSVSKEDTDPEEKASNEDVTK. Phosphothreonine occurs at positions 115 and 122. Ser-129 is subject to Phosphoserine. At Thr-141 the chain carries Phosphothreonine. Residues 144-153 are compositionally biased toward basic residues; the sequence is AARRGRKRKA. The Nuclear localization signal motif lies at 146 to 156; the sequence is RRGRKRKAEKQ. Thr-167 is subject to Phosphothreonine. A phosphoserine mark is found at Ser-177 and Ser-206. Basic and acidic residues predominate over residues 213 to 261; the sequence is EEDKSKKKGQEEKQPKKQLKKDEEGQKEEEKPRKEPDKKEGKKEVESKR. The residue at position 271 (Ser-271) is a Phosphoserine. A Phosphothreonine modification is found at Thr-272. Ser-273 and Ser-275 each carry phosphoserine. The segment covering 274 to 283 has biased composition (acidic residues); the sequence is DSEEEGDDQE. Residues 287–302 show a composition bias toward basic residues; that stretch reads KRKGGRNFQTAHRRNM. Basic and acidic residues predominate over residues 305 to 349; that stretch reads GQHEKEAADRKRKQEEQMETEQQNKDEGKKPEVKKVEKKRETSMD. 2 coiled-coil regions span residues 306–334 and 371–395; these read QHEK…EGKK and NRCI…KHTE. The interval 340–417 is integrase-binding domain (IBD); sequence VEKKRETSMD…VSQVIMEKST (78 aa). Phosphoserine is present on Ser-434. Position 437 is a phosphothreonine (Thr-437). Residue Ser-443 is modified to Phosphoserine. A compositionally biased stretch (basic and acidic residues) spans 446-473; it reads EQRQHEEANKTKDQGKKGPNKKLEKEQT. Residues 446-530 form a disordered region; sequence EQRQHEEANK…ISLKDSTLDN (85 aa). Residues 474–494 show a composition bias toward polar residues; sequence GSKTLNGGSDAQDSNQPQHNG. A compositionally biased stretch (basic and acidic residues) spans 498–530; sequence EESKDNHEASSKKKPSSEERETEISLKDSTLDN. Phosphoserine is present on Ser-514. A Citrulline modification is found at Arg-517. At Ser-522 the chain carries Phosphoserine. At Thr-527 the chain carries Phosphothreonine.

This sequence belongs to the HDGF family. In terms of assembly, monomer. Interacts with IFRD1/PC4. Interacts (via IBD domain) with POGZ (via IBM motif) and CDCA7L (via IBM motifs). Interacts (via IBD domain) with KMT2A (via IBM motifs) with a moderate affinity whereas interacts with the KMT2A-MEN1 complex with a greater affinity; MEN1 enhances interaction of KMT2A with PSIP1. Interacts (via IBD domain) with IWS1 (via IBM motif), MED1 (via IBM motif) and DBF4 (via IBM motifs). Post-translationally, citrullinated by PADI4.

The protein resides in the nucleus. In terms of biological role, transcriptional coactivator involved in neuroepithelial stem cell differentiation and neurogenesis. Involved in particular in lens epithelial cell gene regulation and stress responses. May play an important role in lens epithelial to fiber cell terminal differentiation. May play a protective role during stress-induced apoptosis. The protein is PC4 and SFRS1-interacting protein (PSIP1) of Bos taurus (Bovine).